Reading from the N-terminus, the 485-residue chain is Glutamyl-tRNA(Gln) amidotransferase subunit A (485 aa).

Active-site charge relay system residues include lysine 78 and serine 153. Serine 177 functions as the Acyl-ester intermediate in the catalytic mechanism.

The protein belongs to the amidase family. GatA subfamily. As to quaternary structure, heterotrimer of A, B and C subunits.

The enzyme catalyses L-glutamyl-tRNA(Gln) + L-glutamine + ATP + H2O = L-glutaminyl-tRNA(Gln) + L-glutamate + ADP + phosphate + H(+). Allows the formation of correctly charged Gln-tRNA(Gln) through the transamidation of misacylated Glu-tRNA(Gln) in organisms which lack glutaminyl-tRNA synthetase. The reaction takes place in the presence of glutamine and ATP through an activated gamma-phospho-Glu-tRNA(Gln). The chain is Glutamyl-tRNA(Gln) amidotransferase subunit A from Bacillus mycoides (strain KBAB4) (Bacillus weihenstephanensis).